Consider the following 57-residue polypeptide: MALFSKILIFYVIGVNISFVIIWFISHEKTHIRLLSAFLVGITWPMSLPVALLFSLF.

Transmembrane regions (helical) follow at residues 7–27 (ILIF…FISH) and 37–57 (AFLV…FSLF).

The protein belongs to the GhoT/OrtT toxin family.

Its subcellular location is the cell inner membrane. Functionally, toxic component of a type V toxin-antitoxin (TA) system. Causes membrane damage when induced by MqsR, slowing cell growth and leading to the formation of dormant persister cells; involved with GhoS, its antitoxin, in reducing cell growth during antibacterial stress. Its toxic effects are neutralized by GhoS, which digests ghoT transcripts in a sequence-specific manner. This chain is Toxin GhoT, found in Escherichia coli O157:H7.